The chain runs to 54 residues: 2-aminomuconate deaminase (54 aa).

In terms of assembly, homohexamer.

The enzyme catalyses (2Z,4E)-2-aminomuconate + H2O = (3E)-2-oxohex-3-enedioate + NH4(+). It participates in xenobiotic degradation; nitrobenzene degradation. Functionally, converts 2-aminomuconate to 4-oxalocrotonate, an intermediate step in the biodegradation of nitrobenzene. The polypeptide is 2-aminomuconate deaminase (Ectopseudomonas oleovorans (Pseudomonas oleovorans)).